We begin with the raw amino-acid sequence, 627 residues long: DNA-directed RNA polymerase subunit gamma (627 aa).

Zn(2+) contacts are provided by cysteine 70, cysteine 72, cysteine 85, and cysteine 88. Mg(2+) contacts are provided by aspartate 468, aspartate 470, and aspartate 472.

It belongs to the RNA polymerase beta' chain family. RpoC1 subfamily. In terms of assembly, in cyanobacteria the RNAP catalytic core is composed of 2 alpha, 1 beta, 1 beta', 1 gamma and 1 omega subunit. When a sigma factor is associated with the core the holoenzyme is formed, which can initiate transcription. The cofactor is Mg(2+). Zn(2+) is required as a cofactor.

The enzyme catalyses RNA(n) + a ribonucleoside 5'-triphosphate = RNA(n+1) + diphosphate. Its function is as follows. DNA-dependent RNA polymerase catalyzes the transcription of DNA into RNA using the four ribonucleoside triphosphates as substrates. The chain is DNA-directed RNA polymerase subunit gamma from Synechococcus sp. (strain JA-3-3Ab) (Cyanobacteria bacterium Yellowstone A-Prime).